Here is a 449-residue protein sequence, read N- to C-terminus: Adenylosuccinate synthetase isozyme 1 A (449 aa).

The span at 1 to 10 (MSHKSCYTNP) shows a compositional bias: polar residues. A disordered region spans residues 1 to 22 (MSHKSCYTNPGTGGKRPRNDKG). GTP-binding positions include 34 to 40 (GDEGKGK) and 62 to 64 (GHT). The active-site Proton acceptor is Asp35. Residues Asp35 and Gly62 each contribute to the Mg(2+) site. Asp35 contacts substrate. IMP is bound by residues 35 to 38 (DEGK), 60 to 63 (NAGH), Thr155, Arg169, Asn248, Thr263, and Arg327. His63 serves as the catalytic Proton donor. Position 323-329 (323-329 (VTTGRKR)) interacts with substrate. Residues Arg329, 355–357 (KLD), and 437–440 (GVGK) contribute to the GTP site.

Belongs to the adenylosuccinate synthetase family. As to quaternary structure, homodimer. Mg(2+) is required as a cofactor.

Its subcellular location is the cytoplasm. The catalysed reaction is IMP + L-aspartate + GTP = N(6)-(1,2-dicarboxyethyl)-AMP + GDP + phosphate + 2 H(+). The protein operates within purine metabolism; AMP biosynthesis via de novo pathway; AMP from IMP: step 1/2. Component of the purine nucleotide cycle (PNC), which interconverts IMP and AMP to regulate the nucleotide levels in various tissues, and which contributes to glycolysis and ammoniagenesis. Catalyzes the first committed step in the biosynthesis of AMP from IMP. This Salmo salar (Atlantic salmon) protein is Adenylosuccinate synthetase isozyme 1 A (adss1a).